Consider the following 79-residue polypeptide: Acyl carrier protein (79 aa).

One can recognise a Carrier domain in the interval 2–77; sequence DNIEQRVKKI…LAIDFAKSKA (76 aa). The residue at position 37 (Ser37) is an O-(pantetheine 4'-phosphoryl)serine.

The protein belongs to the acyl carrier protein (ACP) family. Post-translationally, 4'-phosphopantetheine is transferred from CoA to a specific serine of apo-ACP by AcpS. This modification is essential for activity because fatty acids are bound in thioester linkage to the sulfhydryl of the prosthetic group.

It is found in the cytoplasm. It participates in lipid metabolism; fatty acid biosynthesis. Functionally, carrier of the growing fatty acid chain in fatty acid biosynthesis. This Polynucleobacter necessarius subsp. necessarius (strain STIR1) protein is Acyl carrier protein.